We begin with the raw amino-acid sequence, 227 residues long: Large ribosomal subunit protein uL1 (227 aa).

Belongs to the universal ribosomal protein uL1 family. In terms of assembly, part of the 50S ribosomal subunit.

In terms of biological role, binds directly to 23S rRNA. The L1 stalk is quite mobile in the ribosome, and is involved in E site tRNA release. Functionally, protein L1 is also a translational repressor protein, it controls the translation of the L11 operon by binding to its mRNA. In Mesoplasma florum (strain ATCC 33453 / NBRC 100688 / NCTC 11704 / L1) (Acholeplasma florum), this protein is Large ribosomal subunit protein uL1.